The following is a 334-amino-acid chain: GTP 3',8-cyclase (334 aa).

Residues 13 to 239 (RFHRKFYYLR…KVKAANDGPA (227 aa)) enclose the Radical SAM core domain. Arginine 22 serves as a coordination point for GTP. Residues cysteine 29 and cysteine 33 each coordinate [4Fe-4S] cluster. Tyrosine 35 is an S-adenosyl-L-methionine binding site. Cysteine 36 is a [4Fe-4S] cluster binding site. Residue arginine 73 participates in GTP binding. Glycine 77 is an S-adenosyl-L-methionine binding site. Threonine 104 contacts GTP. Residue serine 128 participates in S-adenosyl-L-methionine binding. Lysine 165 serves as a coordination point for GTP. Methionine 199 contacts S-adenosyl-L-methionine. [4Fe-4S] cluster is bound by residues cysteine 262 and cysteine 265. 267–269 (RLR) is a binding site for GTP. Cysteine 279 lines the [4Fe-4S] cluster pocket.

This sequence belongs to the radical SAM superfamily. MoaA family. As to quaternary structure, monomer and homodimer. [4Fe-4S] cluster serves as cofactor.

The catalysed reaction is GTP + AH2 + S-adenosyl-L-methionine = (8S)-3',8-cyclo-7,8-dihydroguanosine 5'-triphosphate + 5'-deoxyadenosine + L-methionine + A + H(+). It participates in cofactor biosynthesis; molybdopterin biosynthesis. In terms of biological role, catalyzes the cyclization of GTP to (8S)-3',8-cyclo-7,8-dihydroguanosine 5'-triphosphate. The sequence is that of GTP 3',8-cyclase from Vibrio vulnificus (strain CMCP6).